The chain runs to 70 residues: Spore germination protein-like protein YpzD (70 aa).

Belongs to the GerPA/GerPF family.

The polypeptide is Spore germination protein-like protein YpzD (ypzD) (Bacillus subtilis (strain 168)).